A 375-amino-acid chain; its full sequence is 4-hydroxy-3-methylbut-2-en-1-yl diphosphate synthase (flavodoxin) (375 aa).

[4Fe-4S] cluster is bound by residues cysteine 270, cysteine 273, cysteine 305, and glutamate 312.

It belongs to the IspG family. [4Fe-4S] cluster is required as a cofactor.

The catalysed reaction is (2E)-4-hydroxy-3-methylbut-2-enyl diphosphate + oxidized [flavodoxin] + H2O + 2 H(+) = 2-C-methyl-D-erythritol 2,4-cyclic diphosphate + reduced [flavodoxin]. It participates in isoprenoid biosynthesis; isopentenyl diphosphate biosynthesis via DXP pathway; isopentenyl diphosphate from 1-deoxy-D-xylulose 5-phosphate: step 5/6. In terms of biological role, converts 2C-methyl-D-erythritol 2,4-cyclodiphosphate (ME-2,4cPP) into 1-hydroxy-2-methyl-2-(E)-butenyl 4-diphosphate. The protein is 4-hydroxy-3-methylbut-2-en-1-yl diphosphate synthase (flavodoxin) of Yersinia pestis (strain Pestoides F).